A 539-amino-acid polypeptide reads, in one-letter code: Phosphoenolpyruvate carboxykinase (ATP) (539 aa).

Substrate is bound by residues Arg-64, Tyr-206, and Lys-212. Residues Lys-212, His-231, and 247 to 255 each bind ATP; that span reads GLSGTGKTT. Residues Lys-212 and His-231 each contribute to the Mn(2+) site. Mn(2+) is bound at residue Asp-268. Residues Glu-296, Arg-332, 448–449, and Thr-454 contribute to the ATP site; that span reads RI. Residue Arg-332 coordinates substrate.

Belongs to the phosphoenolpyruvate carboxykinase (ATP) family. In terms of assembly, monomer. It depends on Mn(2+) as a cofactor.

It localises to the cytoplasm. It carries out the reaction oxaloacetate + ATP = phosphoenolpyruvate + ADP + CO2. The protein operates within carbohydrate biosynthesis; gluconeogenesis. In terms of biological role, involved in the gluconeogenesis. Catalyzes the conversion of oxaloacetate (OAA) to phosphoenolpyruvate (PEP) through direct phosphoryl transfer between the nucleoside triphosphate and OAA. The polypeptide is Phosphoenolpyruvate carboxykinase (ATP) (Yersinia pseudotuberculosis serotype O:1b (strain IP 31758)).